The chain runs to 1357 residues: DNA-directed RNA polymerase subunit beta (1357 aa).

Belongs to the RNA polymerase beta chain family. In terms of assembly, the RNAP catalytic core consists of 2 alpha, 1 beta, 1 beta' and 1 omega subunit. When a sigma factor is associated with the core the holoenzyme is formed, which can initiate transcription.

The catalysed reaction is RNA(n) + a ribonucleoside 5'-triphosphate = RNA(n+1) + diphosphate. In terms of biological role, DNA-dependent RNA polymerase catalyzes the transcription of DNA into RNA using the four ribonucleoside triphosphates as substrates. The protein is DNA-directed RNA polymerase subunit beta of Pseudomonas syringae pv. tomato (strain ATCC BAA-871 / DC3000).